A 113-amino-acid polypeptide reads, in one-letter code: Hydrogenase maturation factor HypA (113 aa).

H2 contacts Ni(2+). The Zn(2+) site is built by C73, C76, C89, and C92.

This sequence belongs to the HypA/HybF family.

Its function is as follows. Involved in the maturation of [NiFe] hydrogenases. Required for nickel insertion into the metal center of the hydrogenase. In Rhodopseudomonas palustris (strain BisA53), this protein is Hydrogenase maturation factor HypA.